The following is a 213-amino-acid chain: tRNA (guanine-N(7)-)-methyltransferase (213 aa).

Glu-44, Glu-69, Asn-96, and Asp-118 together coordinate S-adenosyl-L-methionine. Residue Asp-118 is part of the active site. Residue Lys-122 coordinates substrate. The segment at 124 to 129 (RHEKRR) is interaction with RNA. Substrate contacts are provided by residues Asp-154 and 191 to 194 (TEYE).

Belongs to the class I-like SAM-binding methyltransferase superfamily. TrmB family.

The catalysed reaction is guanosine(46) in tRNA + S-adenosyl-L-methionine = N(7)-methylguanosine(46) in tRNA + S-adenosyl-L-homocysteine. The protein operates within tRNA modification; N(7)-methylguanine-tRNA biosynthesis. Functionally, catalyzes the formation of N(7)-methylguanine at position 46 (m7G46) in tRNA. This chain is tRNA (guanine-N(7)-)-methyltransferase, found in Bacillus licheniformis (strain ATCC 14580 / DSM 13 / JCM 2505 / CCUG 7422 / NBRC 12200 / NCIMB 9375 / NCTC 10341 / NRRL NRS-1264 / Gibson 46).